Consider the following 431-residue polypeptide: Glutamate-1-semialdehyde 2,1-aminomutase (431 aa).

At lysine 265 the chain carries N6-(pyridoxal phosphate)lysine.

This sequence belongs to the class-III pyridoxal-phosphate-dependent aminotransferase family. HemL subfamily. Homodimer. Requires pyridoxal 5'-phosphate as cofactor.

The protein localises to the cytoplasm. The enzyme catalyses (S)-4-amino-5-oxopentanoate = 5-aminolevulinate. It participates in porphyrin-containing compound metabolism; protoporphyrin-IX biosynthesis; 5-aminolevulinate from L-glutamyl-tRNA(Glu): step 2/2. The protein is Glutamate-1-semialdehyde 2,1-aminomutase of Aliivibrio fischeri (strain ATCC 700601 / ES114) (Vibrio fischeri).